A 103-amino-acid polypeptide reads, in one-letter code: Small ribosomal subunit protein uS10 (103 aa).

The protein belongs to the universal ribosomal protein uS10 family. As to quaternary structure, part of the 30S ribosomal subunit.

Its function is as follows. Involved in the binding of tRNA to the ribosomes. This is Small ribosomal subunit protein uS10 from Chlorobium luteolum (strain DSM 273 / BCRC 81028 / 2530) (Pelodictyon luteolum).